Here is a 546-residue protein sequence, read N- to C-terminus: Chaperonin GroEL (546 aa).

ATP contacts are provided by residues 30–33 (TLGP), Lys-51, 87–91 (DGTTT), Gly-415, 479–481 (NAA), and Asp-495. A disordered region spans residues 527–546 (DESAAPAMPGGMGGMGDMGM). Positions 536-546 (GGMGGMGDMGM) are enriched in gly residues.

Belongs to the chaperonin (HSP60) family. Forms a cylinder of 14 subunits composed of two heptameric rings stacked back-to-back. Interacts with the co-chaperonin GroES.

The protein resides in the cytoplasm. The catalysed reaction is ATP + H2O + a folded polypeptide = ADP + phosphate + an unfolded polypeptide.. Functionally, together with its co-chaperonin GroES, plays an essential role in assisting protein folding. The GroEL-GroES system forms a nano-cage that allows encapsulation of the non-native substrate proteins and provides a physical environment optimized to promote and accelerate protein folding. This is Chaperonin GroEL from Acidovorax ebreus (strain TPSY) (Diaphorobacter sp. (strain TPSY)).